A 447-amino-acid polypeptide reads, in one-letter code: Argininosuccinate synthase (447 aa).

ATP is bound by residues 17–25 (AFSGGLDTS) and Ala-43. Residue Tyr-99 coordinates L-citrulline. 2 residues coordinate ATP: Gly-129 and Thr-131. Residues Thr-131, Asn-135, and Asp-136 each contribute to the L-aspartate site. Asn-135 contributes to the L-citrulline binding site. Asp-136 is a binding site for ATP. 2 residues coordinate L-citrulline: Arg-139 and Ser-192. Asp-194 serves as a coordination point for ATP. Residues Thr-201, Glu-203, and Glu-280 each contribute to the L-citrulline site.

Belongs to the argininosuccinate synthase family. Type 2 subfamily. In terms of assembly, homotetramer.

It localises to the cytoplasm. The catalysed reaction is L-citrulline + L-aspartate + ATP = 2-(N(omega)-L-arginino)succinate + AMP + diphosphate + H(+). Its pathway is amino-acid biosynthesis; L-arginine biosynthesis; L-arginine from L-ornithine and carbamoyl phosphate: step 2/3. This is Argininosuccinate synthase from Salmonella heidelberg (strain SL476).